Reading from the N-terminus, the 136-residue chain is Transcription antitermination protein NusB (136 aa).

The protein belongs to the NusB family.

In terms of biological role, involved in transcription antitermination. Required for transcription of ribosomal RNA (rRNA) genes. Binds specifically to the boxA antiterminator sequence of the ribosomal RNA (rrn) operons. The chain is Transcription antitermination protein NusB from Pseudoalteromonas translucida (strain TAC 125).